Reading from the N-terminus, the 105-residue chain is Multidrug resistance protein EbrA (105 aa).

4 helical membrane-spanning segments follow: residues 2-22 (LIGY…AAML), 35-55 (ALVV…LNHI), 57-77 (LSLS…VIGV), and 84-104 (LNAK…LLNW).

The protein belongs to the drug/metabolite transporter (DMT) superfamily. Small multidrug resistance (SMR) (TC 2.A.7.1) family. EbrA/EbrB subfamily. As to quaternary structure, the efflux pump is composed of EbrA and EbrB.

The protein localises to the cell membrane. Functionally, part of a multidrug efflux pump. Confers resistance to cationic lipophilic dyes such as ethidium bromide, acriflavine, pyronine Y and safranin O. The efflux is probably coupled to an influx of protons. This chain is Multidrug resistance protein EbrA (ebrA), found in Bacillus subtilis (strain 168).